Here is a 384-residue protein sequence, read N- to C-terminus: Substance-K receptor (384 aa).

The Extracellular segment spans residues 1-32 (MGGRAIVTDTNIFSGLESNTTGVTAFSMPAWQ). N-linked (GlcNAc...) asparagine glycosylation occurs at asparagine 19. Residues 33–56 (LALWATAYLGLVLVAVTGNATVIW) form a helical membrane-spanning segment. Over 57–69 (IILAHERMRTVTN) the chain is Cytoplasmic. The chain crosses the membrane as a helical span at residues 70 to 90 (YFIINLALADLCMAAFNATFN). Residues 91-107 (FVYASHNIWYFGRAFCY) lie on the Extracellular side of the membrane. An intrachain disulfide couples cysteine 106 to cysteine 181. Residues 108-129 (FQNLFPITAMFVSIYSMTAIAA) traverse the membrane as a helical segment. Over 130-149 (DRYMAIVHPFQPRLSAPITK) the chain is Cytoplasmic. Residues 150-170 (ATIAGIWLVALALASPQCFYS) traverse the membrane as a helical segment. At 171 to 196 (TITVDQGATKCVVAWPNDNGGKMLLL) the chain is on the extracellular side. The helical transmembrane segment at 197-218 (YHLVVFVLVYFLPLVVMFVAYS) threads the bilayer. At 219-251 (VIGLTLWKRAVPRHQAHGANLRHLHAKKKFVKA) the chain is on the cytoplasmic side. The helical transmembrane segment at 252–272 (MVLVVLTFAICWLPYHLYFIL) threads the bilayer. Residues 273-290 (GSFQKDIYYRKFIQQVYL) are Extracellular-facing. A helical membrane pass occupies residues 291-310 (ALFWLAMSSTMYNPIIYCCL). The Cytoplasmic segment spans residues 311–384 (NHRFRSGFRL…SPQDVEPAAP (74 aa)). Residue cysteine 324 is the site of S-palmitoyl cysteine attachment.

This sequence belongs to the G-protein coupled receptor 1 family.

It localises to the cell membrane. In terms of biological role, this is a receptor for the tachykinin neuropeptide substance K (neurokinin A). It is associated with G proteins that activate a phosphatidylinositol-calcium second messenger system. The rank order of affinity of this receptor to tachykinins is: substance K &gt; neuromedin-K &gt; substance P. The sequence is that of Substance-K receptor (TACR2) from Mesocricetus auratus (Golden hamster).